A 412-amino-acid polypeptide reads, in one-letter code: Phosphoglycerate kinase (412 aa).

Substrate contacts are provided by residues 24–26, Arg-47, 70–73, Arg-130, and Arg-167; these read DLN and HLGR. Residues Lys-217, Gly-312, Glu-343, and 369 to 372 each bind ATP; that span reads GGDS.

The protein belongs to the phosphoglycerate kinase family. As to quaternary structure, monomer.

The protein localises to the cytoplasm. The enzyme catalyses (2R)-3-phosphoglycerate + ATP = (2R)-3-phospho-glyceroyl phosphate + ADP. It participates in carbohydrate degradation; glycolysis; pyruvate from D-glyceraldehyde 3-phosphate: step 2/5. This chain is Phosphoglycerate kinase, found in Kineococcus radiotolerans (strain ATCC BAA-149 / DSM 14245 / SRS30216).